Here is a 367-residue protein sequence, read N- to C-terminus: Zinc transport system membrane protein TroD (367 aa).

9 helical membrane-spanning segments follow: residues 5–25 (VVLI…FLVL), 28–48 (ISLM…LGYF), 56–76 (FVPF…AELL), 87–107 (AVGL…SLYA), 140–160 (SLVQ…LFFK), 170–190 (VLAT…MLAV), 201–221 (VGAV…LLLT), 224–244 (LLLM…SGLF), and 251–271 (GSIA…VYLF).

The protein belongs to the ABC-3 integral membrane protein family.

It is found in the cell membrane. Its function is as follows. Part of an ATP-driven transport system TroABCD for zinc. This chain is Zinc transport system membrane protein TroD (troD), found in Treponema pallidum (strain Nichols).